A 128-amino-acid chain; its full sequence is Small ribosomal subunit protein eS6 (128 aa).

The protein belongs to the eukaryotic ribosomal protein eS6 family.

This chain is Small ribosomal subunit protein eS6, found in Thermoplasma volcanium (strain ATCC 51530 / DSM 4299 / JCM 9571 / NBRC 15438 / GSS1).